A 349-amino-acid chain; its full sequence is tRNA pseudouridine synthase D (349 aa).

Position 27 (F27) interacts with substrate. D80 functions as the Nucleophile in the catalytic mechanism. N129 serves as a coordination point for substrate. The TRUD domain occupies 155-303 (GVPNYFGAQR…VEAARRAMLL (149 aa)). F329 contributes to the substrate binding site.

This sequence belongs to the pseudouridine synthase TruD family.

It catalyses the reaction uridine(13) in tRNA = pseudouridine(13) in tRNA. Functionally, responsible for synthesis of pseudouridine from uracil-13 in transfer RNAs. The polypeptide is tRNA pseudouridine synthase D (Escherichia coli (strain K12 / MC4100 / BW2952)).